The chain runs to 313 residues: Porphobilinogen deaminase (313 aa).

Cys242 is modified (S-(dipyrrolylmethanemethyl)cysteine).

This sequence belongs to the HMBS family. In terms of assembly, monomer. The cofactor is dipyrromethane.

It catalyses the reaction 4 porphobilinogen + H2O = hydroxymethylbilane + 4 NH4(+). Its pathway is porphyrin-containing compound metabolism; protoporphyrin-IX biosynthesis; coproporphyrinogen-III from 5-aminolevulinate: step 2/4. Its function is as follows. Tetrapolymerization of the monopyrrole PBG into the hydroxymethylbilane pre-uroporphyrinogen in several discrete steps. In Salmonella dublin (strain CT_02021853), this protein is Porphobilinogen deaminase.